The chain runs to 657 residues: Regulator of MON1-CCZ1 complex (657 aa).

Residues 471-637 (KKEMPHKFVI…NFTPGEHCEE (167 aa)) form the Mic1 domain.

The protein belongs to the RMC1 family. Found in a complex with RMC1, CCZ1 MON1A and MON1B.

It localises to the lysosome membrane. The protein resides in the late endosome membrane. Component of the CCZ1-MON1 RAB7A guanine exchange factor (GEF). Acts as a positive regulator of CCZ1-MON1A/B function necessary for endosomal/autophagic flux and efficient RAB7A localization. The protein is Regulator of MON1-CCZ1 complex of Homo sapiens (Human).